The chain runs to 158 residues: Small ribosomal subunit protein uS19 (158 aa).

Belongs to the universal ribosomal protein uS19 family.

Functionally, protein S19 forms a complex with S13 that binds strongly to the 16S ribosomal RNA. In Pyrobaculum calidifontis (strain DSM 21063 / JCM 11548 / VA1), this protein is Small ribosomal subunit protein uS19.